Reading from the N-terminus, the 75-residue chain is Small integral membrane protein 7 (75 aa).

An N-terminal signal peptide occupies residues 1-17; that stretch reads MIGDILLFGTLLMNAGA. At 18–53 the chain is on the extracellular side; the sequence is VLNFKLKKKDTQGFGEESKEPSTGDNIREFLLSLRY. The helical transmembrane segment at 54–74 threads the bilayer; the sequence is FRIFIALWNVFMMLCMIVLFG. A topological domain (cytoplasmic) is located at residue Ser-75.

The protein belongs to the SMIM7 family.

The protein localises to the membrane. This chain is Small integral membrane protein 7 (Smim7), found in Mus musculus (Mouse).